The primary structure comprises 44 residues: MPHNEYYNDDGELDRETCPRCGDTVLAEHEDRQHCGKCGYTEWK.

Residues C18, C21, C35, and C38 each contribute to the Zn(2+) site. Residues 18–38 (CPRCGDTVLAEHEDRQHCGKC) form a C4-type zinc finger.

Belongs to the eukaryotic ribosomal protein eS31 family. In terms of assembly, part of the 30S ribosomal subunit. Requires Zn(2+) as cofactor.

The protein is Small ribosomal subunit protein eS31 of Haloarcula marismortui (strain ATCC 43049 / DSM 3752 / JCM 8966 / VKM B-1809) (Halobacterium marismortui).